The primary structure comprises 181 residues: Protein Syd (181 aa).

It belongs to the Syd family.

The protein localises to the cell inner membrane. In terms of biological role, interacts with the SecY protein in vivo. May bind preferentially to an uncomplexed state of SecY, thus functioning either as a chelating agent for excess SecY in the cell or as a regulatory factor that negatively controls the translocase function. This chain is Protein Syd, found in Shigella dysenteriae serotype 1 (strain Sd197).